Consider the following 384-residue polypeptide: uncharacterized protein (384 aa).

This is an uncharacterized protein from Acanthamoeba polyphaga (Amoeba).